The chain runs to 194 residues: Small ribosomal subunit protein uS5 (194 aa).

The S5 DRBM domain occupies 26-89 (LEEKVVEIRR…ADAKKRIIKV (64 aa)).

It belongs to the universal ribosomal protein uS5 family. In terms of assembly, part of the 30S ribosomal subunit. Contacts proteins S4 and S8.

Functionally, with S4 and S12 plays an important role in translational accuracy. In terms of biological role, located at the back of the 30S subunit body where it stabilizes the conformation of the head with respect to the body. The chain is Small ribosomal subunit protein uS5 from Sulfurihydrogenibium sp. (strain YO3AOP1).